Here is a 246-residue protein sequence, read N- to C-terminus: Ubiquinone biosynthesis O-methyltransferase (246 aa).

S-adenosyl-L-methionine contacts are provided by Arg40, Gly70, Asp91, and Met135.

It belongs to the methyltransferase superfamily. UbiG/COQ3 family.

It catalyses the reaction a 3-demethylubiquinol + S-adenosyl-L-methionine = a ubiquinol + S-adenosyl-L-homocysteine + H(+). The enzyme catalyses a 3-(all-trans-polyprenyl)benzene-1,2-diol + S-adenosyl-L-methionine = a 2-methoxy-6-(all-trans-polyprenyl)phenol + S-adenosyl-L-homocysteine + H(+). It participates in cofactor biosynthesis; ubiquinone biosynthesis. O-methyltransferase that catalyzes the 2 O-methylation steps in the ubiquinone biosynthetic pathway. In Colwellia psychrerythraea (strain 34H / ATCC BAA-681) (Vibrio psychroerythus), this protein is Ubiquinone biosynthesis O-methyltransferase.